We begin with the raw amino-acid sequence, 311 residues long: Olfactory receptor 52J3 (311 aa).

The Extracellular segment spans residues 1–27 (MFYHNKSIFHPVTFFLIGIPGLEDFHM). Residue Asn5 is glycosylated (N-linked (GlcNAc...) asparagine). The helical transmembrane segment at 28–48 (WISGPFCSVYLVALLGNATIL) threads the bilayer. At 49–56 (LVIKVEQT) the chain is on the cytoplasmic side. A helical transmembrane segment spans residues 57-77 (LREPMFYFLAILSTIDLALST). At 78 to 101 (TSVPRMLGIFWFDAHEINYGACVA) the chain is on the extracellular side. A disulfide bridge connects residues Cys99 and Cys191. A helical transmembrane segment spans residues 102-122 (QMFLIHAFTGMEAEVLLAMAF). The Cytoplasmic segment spans residues 123-141 (DRYVAVCAPLHYATILTSQ). Residues 142-162 (VLVGISMCIVIRPVLLTLPMV) form a helical membrane-spanning segment. The Extracellular portion of the chain corresponds to 163 to 198 (YLIYRLPFCQAHIIAHSYCEHMGIAKLSCGNIRING). A helical membrane pass occupies residues 199–218 (IYGLFVVSFFVLNLVLIGIS). At 219–238 (YVYILRAVFRLPSHDAQLKA) the chain is on the cytoplasmic side. Residues 239-259 (LSTCGAHVGVICVFYIPSVFS) traverse the membrane as a helical segment. Over 260–274 (FLTHRFGHQIPGYIH) the chain is Extracellular. Residues 275 to 295 (ILVANLYLIIPPSLNPIIYGV) traverse the membrane as a helical segment. The Cytoplasmic portion of the chain corresponds to 296-311 (RTKQIRERVLYVFTKK).

This sequence belongs to the G-protein coupled receptor 1 family.

It is found in the cell membrane. In terms of biological role, odorant receptor. This Homo sapiens (Human) protein is Olfactory receptor 52J3 (OR52J3).